The following is a 59-amino-acid chain: Conotoxin Sr5.4 (59 aa).

Positions 1–22 are cleaved as a signal peptide; it reads MRCLPVFVILLLLIASAPSVDA. A propeptide spanning residues 23 to 44 is cleaved from the precursor; the sequence is QLKTKDDVPLASFHDNAKGTQH.

This sequence belongs to the conotoxin T superfamily. Contains 2 disulfide bonds that can be either 'C1-C3, C2-C4' or 'C1-C4, C2-C3', since these disulfide connectivities have been observed for conotoxins with cysteine framework V (for examples, see AC P0DQQ7 and AC P81755). As to expression, expressed by the venom duct.

The protein resides in the secreted. The sequence is that of Conotoxin Sr5.4 from Conus spurius (Alphabet cone).